The chain runs to 65 residues: Cell death protein rpr (65 aa).

Interacts with Diap2 (via BIR2 domain).

Functionally, activator of apoptosis, as well as grim and hid, that acts on the effector Dredd. This chain is Cell death protein rpr (rpr), found in Drosophila melanogaster (Fruit fly).